We begin with the raw amino-acid sequence, 356 residues long: tRNA pseudouridine synthase D (356 aa).

The active-site Nucleophile is the aspartate 84. Residues 159–302 (GVPNYYGPQR…RRGARRPIRV (144 aa)) enclose the TRUD domain.

Belongs to the pseudouridine synthase TruD family.

It carries out the reaction uridine(13) in tRNA = pseudouridine(13) in tRNA. Its function is as follows. Responsible for synthesis of pseudouridine from uracil-13 in transfer RNAs. In Thermus thermophilus (strain ATCC 27634 / DSM 579 / HB8), this protein is tRNA pseudouridine synthase D.